The sequence spans 1183 residues: Protein deacetylase HDAC6 (1183 aa).

The disordered stretch occupies residues 1–61; that stretch reads MTSTGQDSST…KGKMKKLSQP (61 aa). The segment covering 18–29 has biased composition (polar residues); that stretch reads NPQSPLQDSSAT. The residue at position 21 (S21) is a Phosphoserine. R32 bears the Omega-N-methylarginine mark. The Nuclear export signal motif lies at 66 to 75; it reads LIVGLQGLDL. Histone deacetylase regions lie at residues 86 to 434 and 512 to 830; these read GLVF…TLLG and GLVY…SLLG. H215 (1) is an active-site residue. H641 (2) is an active-site residue. Positions 972-1042 are disordered; the sequence is ATENSANQTT…EAQEVQESEE (71 aa). Low complexity predominate over residues 980–996; it reads TTSGEEASGETESFGTS. A phosphothreonine mark is found at T990, T995, and T1005. A compositionally biased stretch (polar residues) spans 997–1008; the sequence is PSSNASKQTTGA. A Phosphoserine modification is found at S1009. Positions 1021-1035 are enriched in low complexity; that stretch reads ELGLSSTLELSSEAQ. Residues 1079 to 1177 form a UBP-type zinc finger; that stretch reads SWCPHLMAVC…NAAHQNKFGE (99 aa). The Zn(2+) site is built by C1081, H1083, C1101, C1104, C1113, C1116, and C1121. The segment at 1122–1124 is ubiquitin binding; the sequence is SRY. The Zn(2+) site is built by H1128, H1132, H1138, C1151, and C1154. The ubiquitin binding stretch occupies residues 1150–1157; sequence WCYLCQAY.

Belongs to the histone deacetylase family. HD type 2 subfamily. Forms a trimeric complex in the nucleus consisting of BANP, HDAC6 and KHDRBS1/SAM68; HDAC6 keeps KHDRBS1 in a deacetylated state which inhibits the inclusion of CD44 alternate exons. The complex is disrupted by MAPK1/MAPK3-mediated phosphorylation of BANP which results in BANP export to the cytoplasm. This facilitates acetylation of KHDRBS1 and CD44 variant exon inclusion. Interacts with SIRT2 (via both phosphorylated, unphosphorylated, active or inactive forms); the interaction is necessary for the complex to interact with alpha-tubulin. Under proteasome impairment conditions, interacts with UBD via its histone deacetylase 1 and UBP-type zinc-finger regions. Interacts with BBIP1, CBFA2T3, CYLD, DDIT3/CHOP, ZMYND15, F-actin and HDAC11. Interacts with RIPOR2; this interaction occurs during early myogenic differentiation and prevents HDAC6 to deacetylate tubulin. Interacts with AURKA; AURKA-mediated phosphorylation of HDAC6 promotes deacetylation of alpha-tubulin. Interacts with DYSF; this interaction occurs during early myogenic differentiation. Interacts with TPPP; inhibiting the tubulin deacetylase activity of HDAC6. Interacts with DYNLL1. Interacts with ATP13A2; the interaction results in recruitment of HDAC6 to lysosomes to promote CTTN deacetylation. Interacts with CCDC141 (via the N-terminal region); inhibiting the deacetylase activity of HDAC6. Interacts with IPO7; the interaction facilitates HDAC6 nuclear translocation in dental papilla cells. It depends on Zn(2+) as a cofactor. In terms of processing, phosphorylated by AURKA; phosphorylation increases HDAC6-mediated deacetylation of alpha-tubulin and subsequent disassembly of cilia. Post-translationally, ubiquitinated. Its polyubiquitination however does not lead to its degradation. Sumoylated in vitro.

Its subcellular location is the cytoplasm. It localises to the cytoskeleton. The protein resides in the nucleus. It is found in the perikaryon. The protein localises to the cell projection. Its subcellular location is the dendrite. It localises to the axon. The protein resides in the cilium. It is found in the microtubule organizing center. The protein localises to the centrosome. Its subcellular location is the cilium basal body. It catalyses the reaction N(6)-acetyl-L-lysyl-[protein] + H2O = L-lysyl-[protein] + acetate. The enzyme catalyses N(6)-acetyl-L-lysyl-[alpha-tubulin] + H2O = L-lysyl-[alpha-tubulin] + acetate. Its pathway is protein modification; protein ubiquitination. Deacetylates a wide range of non-histone substrates. Plays a central role in microtubule-dependent cell motility by mediating deacetylation of tubulin. Required for cilia disassembly via deacetylation of alpha-tubulin. Alpha-tubulin deacetylation results in destabilization of dynamic microtubules. Promotes deacetylation of CTTN, leading to actin polymerization, promotion of autophagosome-lysosome fusion and completion of autophagy. Deacetylates SQSTM1. Deacetylates peroxiredoxins PRDX1 and PRDX2, decreasing their reducing activity. Deacetylates antiviral protein RIGI in the presence of viral mRNAs which is required for viral RNA detection by RIGI. Sequentially deacetylates and polyubiquitinates DNA mismatch repair protein MSH2 which leads to MSH2 degradation, reducing cellular sensitivity to DNA-damaging agents and decreasing cellular DNA mismatch repair activities. Deacetylates DNA mismatch repair protein MLH1 which prevents recruitment of the MutL alpha complex (formed by the MLH1-PMS2 heterodimer) to the MutS alpha complex (formed by the MSH2-MSH6 heterodimer), leading to tolerance of DNA damage. Deacetylates RHOT1/MIRO1 which blocks mitochondrial transport and mediates axon growth inhibition. Deacetylates transcription factor SP1 which leads to increased expression of ENG, positively regulating angiogenesis. Deacetylates KHDRBS1/SAM68 which regulates alternative splicing by inhibiting the inclusion of CD44 alternate exons. Promotes odontoblast differentiation following IPO7-mediated nuclear import and subsequent repression of RUNX2 expression. In addition to its protein deacetylase activity, plays a key role in the degradation of misfolded proteins: when misfolded proteins are too abundant to be degraded by the chaperone refolding system and the ubiquitin-proteasome, mediates the transport of misfolded proteins to a cytoplasmic juxtanuclear structure called aggresome. Probably acts as an adapter that recognizes polyubiquitinated misfolded proteins and targets them to the aggresome, facilitating their clearance by autophagy. This Rattus norvegicus (Rat) protein is Protein deacetylase HDAC6.